Here is a 379-residue protein sequence, read N- to C-terminus: Queuine tRNA-ribosyltransferase (379 aa).

The active-site Proton acceptor is the Asp94. Substrate is bound by residues 94–98, Asp148, Gln191, and Gly218; that span reads DSGGF. The tract at residues 249–255 is RNA binding; sequence GVGSPDS. Asp268 serves as the catalytic Nucleophile. The RNA binding; important for wobble base 34 recognition stretch occupies residues 273–277; it reads TRIAR. Cys306, Cys308, Cys311, and His337 together coordinate Zn(2+).

This sequence belongs to the queuine tRNA-ribosyltransferase family. Homodimer. Within each dimer, one monomer is responsible for RNA recognition and catalysis, while the other monomer binds to the replacement base PreQ1. The cofactor is Zn(2+).

The catalysed reaction is 7-aminomethyl-7-carbaguanine + guanosine(34) in tRNA = 7-aminomethyl-7-carbaguanosine(34) in tRNA + guanine. The protein operates within tRNA modification; tRNA-queuosine biosynthesis. Catalyzes the base-exchange of a guanine (G) residue with the queuine precursor 7-aminomethyl-7-deazaguanine (PreQ1) at position 34 (anticodon wobble position) in tRNAs with GU(N) anticodons (tRNA-Asp, -Asn, -His and -Tyr). Catalysis occurs through a double-displacement mechanism. The nucleophile active site attacks the C1' of nucleotide 34 to detach the guanine base from the RNA, forming a covalent enzyme-RNA intermediate. The proton acceptor active site deprotonates the incoming PreQ1, allowing a nucleophilic attack on the C1' of the ribose to form the product. After dissociation, two additional enzymatic reactions on the tRNA convert PreQ1 to queuine (Q), resulting in the hypermodified nucleoside queuosine (7-(((4,5-cis-dihydroxy-2-cyclopenten-1-yl)amino)methyl)-7-deazaguanosine). This chain is Queuine tRNA-ribosyltransferase, found in Bacillus cereus (strain Q1).